A 238-amino-acid chain; its full sequence is Ribonuclease PH (238 aa).

Residues R86 and 124 to 126 (GTR) each bind phosphate.

This sequence belongs to the RNase PH family. As to quaternary structure, homohexameric ring arranged as a trimer of dimers.

It catalyses the reaction tRNA(n+1) + phosphate = tRNA(n) + a ribonucleoside 5'-diphosphate. Its function is as follows. Phosphorolytic 3'-5' exoribonuclease that plays an important role in tRNA 3'-end maturation. Removes nucleotide residues following the 3'-CCA terminus of tRNAs; can also add nucleotides to the ends of RNA molecules by using nucleoside diphosphates as substrates, but this may not be physiologically important. Probably plays a role in initiation of 16S rRNA degradation (leading to ribosome degradation) during starvation. This Trichlorobacter lovleyi (strain ATCC BAA-1151 / DSM 17278 / SZ) (Geobacter lovleyi) protein is Ribonuclease PH.